The chain runs to 106 residues: Hydrogenase expression/formation protein HoxL (106 aa).

The protein belongs to the HupF/HypC family.

The chain is Hydrogenase expression/formation protein HoxL (hoxL) from Azotobacter vinelandii.